We begin with the raw amino-acid sequence, 281 residues long: Elongation factor 1-delta (281 aa).

At A2 the chain carries N-acetylalanine. Position 17 is an N6-acetyllysine (K17). A phosphoserine mark is found at S37, S44, S60, S86, and S106. The tract at residues 80–115 (LVVRIASLEVENQSLRGVVQELQQAISKLEARLNVL) is leucine-zipper. Position 107 is an N6-acetyllysine (K107). K117 carries the N6-acetyllysine; alternate modification. Residue K117 is modified to N6-succinyllysine; alternate. Residues 118–172 (SSPGHRATAPQTQHVSPMRQVEPPAKKPATPAEDDEDDDIDLFGSDNEEEDKEAA) are disordered. A Phosphoserine modification is found at S119. The residue at position 129 (T129) is a Phosphothreonine. Phosphoserine is present on S133. T147 bears the Phosphothreonine mark. A compositionally biased stretch (acidic residues) spans 149-169 (AEDDEDDDIDLFGSDNEEEDK). The residue at position 162 (S162) is a Phosphoserine; by CK2. The segment at 173–281 (QLREERLRQY…SVDIAAFNKI (109 aa)) is catalytic (GEF).

This sequence belongs to the EF-1-beta/EF-1-delta family. As to quaternary structure, EF-1 is composed of 4 subunits: alpha, beta, delta isoform 1, and gamma. Isoform 2 interacts with HSF1 and NFE2L2.

Its subcellular location is the nucleus. EF-1-beta and EF-1-delta stimulate the exchange of GDP bound to EF-1-alpha to GTP, regenerating EF-1-alpha for another round of transfer of aminoacyl-tRNAs to the ribosome. Its function is as follows. Regulates induction of heat-shock-responsive genes through association with heat shock transcription factors and direct DNA-binding at heat shock promoter elements (HSE). This Macaca fascicularis (Crab-eating macaque) protein is Elongation factor 1-delta (EEF1D).